The primary structure comprises 298 residues: N-acetylmuramic acid 6-phosphate etherase (298 aa).

The SIS domain maps to 55 to 218 (IHTQVSGGGR…STGLMIKSGK (164 aa)). Glutamate 83 serves as the catalytic Proton donor. Glutamate 114 is an active-site residue.

This sequence belongs to the GCKR-like family. MurNAc-6-P etherase subfamily. As to quaternary structure, homodimer.

The enzyme catalyses N-acetyl-D-muramate 6-phosphate + H2O = N-acetyl-D-glucosamine 6-phosphate + (R)-lactate. It functions in the pathway amino-sugar metabolism; 1,6-anhydro-N-acetylmuramate degradation. Its pathway is amino-sugar metabolism; N-acetylmuramate degradation. The protein operates within cell wall biogenesis; peptidoglycan recycling. Functionally, specifically catalyzes the cleavage of the D-lactyl ether substituent of MurNAc 6-phosphate, producing GlcNAc 6-phosphate and D-lactate. Together with AnmK, is also required for the utilization of anhydro-N-acetylmuramic acid (anhMurNAc) either imported from the medium or derived from its own cell wall murein, and thus plays a role in cell wall recycling. The chain is N-acetylmuramic acid 6-phosphate etherase from Escherichia coli O1:K1 / APEC.